The following is a 72-amino-acid chain: Translation initiation factor IF-1 (72 aa).

The region spanning 2–72 (AKEDVIEVEG…TRGRITYRYK (71 aa)) is the S1-like domain. At tyrosine 60 the chain carries Phosphotyrosine.

It belongs to the IF-1 family. As to quaternary structure, component of the 30S ribosomal translation pre-initiation complex which assembles on the 30S ribosome in the order IF-2 and IF-3, IF-1 and N-formylmethionyl-tRNA(fMet); mRNA recruitment can occur at any time during PIC assembly.

The protein localises to the cytoplasm. In terms of biological role, one of the essential components for the initiation of protein synthesis. Stabilizes the binding of IF-2 and IF-3 on the 30S subunit to which N-formylmethionyl-tRNA(fMet) subsequently binds. Helps modulate mRNA selection, yielding the 30S pre-initiation complex (PIC). Upon addition of the 50S ribosomal subunit IF-1, IF-2 and IF-3 are released leaving the mature 70S translation initiation complex. This Halalkalibacterium halodurans (strain ATCC BAA-125 / DSM 18197 / FERM 7344 / JCM 9153 / C-125) (Bacillus halodurans) protein is Translation initiation factor IF-1.